The chain runs to 556 residues: CDP-diacylglycerol--glycerol-3-phosphate 3-phosphatidyltransferase, mitochondrial (556 aa).

The N-terminal 28 residues, 1–28 (MAAAAAAAAGPVFWRRLLGLLPGRPGLA), are a transit peptide targeting the mitochondrion. Position 49 is a phosphoserine (Ser49). 124 to 131 (ASLYLGIG) contacts ATP. PLD phosphodiesterase domains follow at residues 215–241 (TIGL…SDSY) and 419–457 (FGAK…LQEY). Active-site residues include His220, Lys222, and Asp227.

Belongs to the CDP-alcohol phosphatidyltransferase class-II family.

The protein resides in the mitochondrion. It catalyses the reaction a CDP-1,2-diacyl-sn-glycerol + sn-glycerol 3-phosphate = a 1,2-diacyl-sn-glycero-3-phospho-(1'-sn-glycero-3'-phosphate) + CMP + H(+). It participates in phospholipid metabolism; phosphatidylglycerol biosynthesis; phosphatidylglycerol from CDP-diacylglycerol: step 1/2. With respect to regulation, activated by calcium and magnesium and inhibited by other bivalent cations. Functions in the biosynthesis of the anionic phospholipids phosphatidylglycerol and cardiolipin. In Bos taurus (Bovine), this protein is CDP-diacylglycerol--glycerol-3-phosphate 3-phosphatidyltransferase, mitochondrial (PGS1).